The primary structure comprises 215 residues: Peptide methionine sulfoxide reductase MsrA (215 aa).

C58 is a catalytic residue.

The protein belongs to the MsrA Met sulfoxide reductase family.

It catalyses the reaction L-methionyl-[protein] + [thioredoxin]-disulfide + H2O = L-methionyl-(S)-S-oxide-[protein] + [thioredoxin]-dithiol. The catalysed reaction is [thioredoxin]-disulfide + L-methionine + H2O = L-methionine (S)-S-oxide + [thioredoxin]-dithiol. Its function is as follows. Has an important function as a repair enzyme for proteins that have been inactivated by oxidation. Catalyzes the reversible oxidation-reduction of methionine sulfoxide in proteins to methionine. The chain is Peptide methionine sulfoxide reductase MsrA from Pseudomonas savastanoi pv. phaseolicola (strain 1448A / Race 6) (Pseudomonas syringae pv. phaseolicola (strain 1448A / Race 6)).